Reading from the N-terminus, the 911-residue chain is Golgin IMH1 (911 aa).

Disordered regions lie at residues 16-41 (LAKG…SGLP) and 271-314 (KELP…ETVD). Residues 101-280 (FFQDLNNKNN…KELPKAISHQ (180 aa)) are a coiled coil. The span at 286 to 299 (NRRKKNRNKGKKNK) shows a compositional bias: basic residues. Residues Ser308 and Ser660 each carry the phosphoserine modification. 2 coiled-coil regions span residues 312-735 (TVDN…ALKH) and 766-814 (SKAD…KERQ). Residues 814–850 (QYSDKSGRVSRSGSIGTLANANIDSSPANNSNPTKLE) are disordered. The segment covering 822–847 (VSRSGSIGTLANANIDSSPANNSNPT) has biased composition (polar residues). Residue Ser827 is modified to Phosphoserine. The residue at position 830 (Thr830) is a Phosphothreonine. A GRIP domain is found at 861–909 (DSEKNEKIAYIKNVLLGFLEHKEQRNQLLPVISMLLQLDSTDEKRLVMS).

In terms of assembly, forms oligomers and is present in high-molecular-mass complexes. Interacts with ARL1.

Its subcellular location is the cytoplasm. It is found in the golgi apparatus membrane. Involved in vesicular transport between an endosomal compartment and the Golgi apparatus. The protein is Golgin IMH1 (IMH1) of Saccharomyces cerevisiae (strain ATCC 204508 / S288c) (Baker's yeast).